Reading from the N-terminus, the 244-residue chain is 1-(5-phosphoribosyl)-5-[(5-phosphoribosylamino)methylideneamino] imidazole-4-carboxamide isomerase (244 aa).

Asp-10 (proton acceptor) is an active-site residue. The active-site Proton donor is the Asp-129.

This sequence belongs to the HisA/HisF family.

Its subcellular location is the cytoplasm. The catalysed reaction is 1-(5-phospho-beta-D-ribosyl)-5-[(5-phospho-beta-D-ribosylamino)methylideneamino]imidazole-4-carboxamide = 5-[(5-phospho-1-deoxy-D-ribulos-1-ylimino)methylamino]-1-(5-phospho-beta-D-ribosyl)imidazole-4-carboxamide. It participates in amino-acid biosynthesis; L-histidine biosynthesis; L-histidine from 5-phospho-alpha-D-ribose 1-diphosphate: step 4/9. This Rhodococcus erythropolis (strain PR4 / NBRC 100887) protein is 1-(5-phosphoribosyl)-5-[(5-phosphoribosylamino)methylideneamino] imidazole-4-carboxamide isomerase.